Here is a 995-residue protein sequence, read N- to C-terminus: DNA repair protein Rev1 (995 aa).

In terms of domain architecture, BRCT spans 35 to 121 (RKSDLFQGIS…KIVDYKPYLL (87 aa)). Disordered regions lie at residues 135–164 (GKPKDNGANESKSDVEPPKDKAEVEVDSTK) and 182–211 (VATSPEKEASASESKITNLSTTSNNSTTAR). Over residues 136–164 (KPKDNGANESKSDVEPPKDKAEVEVDSTK) the composition is skewed to basic and acidic residues. A compositionally biased stretch (low complexity) spans 192–211 (ASESKITNLSTTSNNSTTAR). Residues 275–505 (VMHIDMDCFF…MSLDLLPGVG (231 aa)) enclose the UmuC domain. Position 279 (D279) interacts with Mg(2+). Residues 361 to 367 (SCSYEAR), N373, and D421 contribute to the dCTP site. D421 contributes to the Mg(2+) binding site. E422 is a catalytic residue. Residues 696–868 (SEMRKDKPIP…HYIRSDQIVA (173 aa)) form an interaction with PolI region. Residues 878–995 (VNPHILKLIS…IEYIRCIKCS (118 aa)) form an interaction with PolH/DNApol-eta region.

It belongs to the DNA polymerase type-Y family. Interacts (via C-terminus) with PolH/DNApol-eta (via C-terminal regions). Interacts (via C-terminus) with PolI. It depends on Mg(2+) as a cofactor.

It is found in the nucleus. Functionally, deoxycytidyl transferase involved in DNA repair. Transfers a dCMP residue from dCTP to the 3'-end of a DNA primer in a template-dependent reaction. May assist in the first step in the bypass of abasic lesions by the insertion of a nucleotide opposite the lesion. Required for normal induction of mutations by physical and chemical agents. During homologous recombination (HR) repair of DNA double-strand breaks (DSBs) regulates the extent of repair synthesis. Possibly recruits the DNA polymerase zeta complex or another translesion polymerase to early DSB repair intermediates to initiate repair synthesis, while also blocking the access of more processive polymerases preventing them from acting during the initial stages of HR repair. This Drosophila melanogaster (Fruit fly) protein is DNA repair protein Rev1.